The following is a 157-amino-acid chain: S-ribosylhomocysteine lyase (157 aa).

3 residues coordinate Fe cation: histidine 54, histidine 58, and cysteine 126.

This sequence belongs to the LuxS family. As to quaternary structure, homodimer. It depends on Fe cation as a cofactor.

It carries out the reaction S-(5-deoxy-D-ribos-5-yl)-L-homocysteine = (S)-4,5-dihydroxypentane-2,3-dione + L-homocysteine. In terms of biological role, involved in the synthesis of autoinducer 2 (AI-2) which is secreted by bacteria and is used to communicate both the cell density and the metabolic potential of the environment. The regulation of gene expression in response to changes in cell density is called quorum sensing. Catalyzes the transformation of S-ribosylhomocysteine (RHC) to homocysteine (HC) and 4,5-dihydroxy-2,3-pentadione (DPD). The protein is S-ribosylhomocysteine lyase of Bacillus licheniformis (strain ATCC 14580 / DSM 13 / JCM 2505 / CCUG 7422 / NBRC 12200 / NCIMB 9375 / NCTC 10341 / NRRL NRS-1264 / Gibson 46).